The sequence spans 514 residues: Maturase K (514 aa).

Belongs to the intron maturase 2 family. MatK subfamily.

The protein localises to the plastid. It is found in the chloroplast. Usually encoded in the trnK tRNA gene intron. Probably assists in splicing its own and other chloroplast group II introns. This Acer monspessulanum (Montpellier maple) protein is Maturase K.